A 139-amino-acid polypeptide reads, in one-letter code: D-ribose pyranase (139 aa).

The active-site Proton donor is H20. Substrate contacts are provided by residues D28, H106, and Y128 to N130.

The protein belongs to the RbsD / FucU family. RbsD subfamily. Homodecamer.

The protein resides in the cytoplasm. It carries out the reaction beta-D-ribopyranose = beta-D-ribofuranose. It participates in carbohydrate metabolism; D-ribose degradation; D-ribose 5-phosphate from beta-D-ribopyranose: step 1/2. Functionally, catalyzes the interconversion of beta-pyran and beta-furan forms of D-ribose. This Salmonella arizonae (strain ATCC BAA-731 / CDC346-86 / RSK2980) protein is D-ribose pyranase.